The following is a 25-amino-acid chain: Antimicrobial peptide THP3 (25 aa).

It localises to the secreted. Bactericidal activity; inhibits Staphylococcus aureus. In Meleagris gallopavo (Wild turkey), this protein is Antimicrobial peptide THP3.